The sequence spans 235 residues: MASASKSWLPWRKMFKLGWASFVDPELAKTAFLEFAKQFYVTSSAGAILFDLKKSQGLDQLQAIEKTRKVIITEQFANQTGKWILFDKENTKRINSLAQEHITPLIKRILRLADFKNVLINVQHHKKLQKCLLWEINGLICLVESLQFMENPTAIMEWFQGLKKHCPNVAVVTISGQHKPVIEPSLTEYKAVFGSSLLSFHLDATTINNSHLVRQILEQIKIKATLKSNSKVAKS.

This is an uncharacterized protein from Mycoplasma pneumoniae (strain ATCC 29342 / M129 / Subtype 1) (Mycoplasmoides pneumoniae).